Consider the following 153-residue polypeptide: Large ribosomal subunit protein uL15 (153 aa).

The segment at 21–40 is disordered; the sequence is RGIGSGKGKTGGRGIKGQKS. Gly residues predominate over residues 23–35; it reads IGSGKGKTGGRGI.

The protein belongs to the universal ribosomal protein uL15 family. In terms of assembly, part of the 50S ribosomal subunit.

In terms of biological role, binds to the 23S rRNA. The polypeptide is Large ribosomal subunit protein uL15 (Rickettsia canadensis (strain McKiel)).